Reading from the N-terminus, the 832-residue chain is Prickle-like protein 1-B (832 aa).

The PET domain occupies 14–122 (FGCQRSSTSD…NIKMLSRAVM (109 aa)). 3 LIM zinc-binding domains span residues 124-188 (AMCE…ELLK), 189-249 (PRCS…HYAE), and 250-313 (YCES…EDVH). 4 disordered regions span residues 312–346 (VHAS…ADQC), 428–455 (QQPS…QRNN), 602–701 (ICQE…KERN), and 766–832 (CSSS…CIIS). Composition is skewed to basic and acidic residues over residues 432–453 (EDNR…DLQR) and 603–614 (CQEKPPPEEKPM). 2 stretches are compositionally biased toward basic residues: residues 669-680 (RPHHHRRRKSRK) and 816-832 (TKSK…CIIS). At Cys829 the chain carries Cysteine methyl ester. A lipid anchor (S-farnesyl cysteine) is attached at Cys829. Residues 830 to 832 (IIS) constitute a propeptide, removed in mature form.

This sequence belongs to the prickle / espinas / testin family. Interacts with dvl2/dsh and mapk8/jnk1. In terms of tissue distribution, expressed in the dorsal marginal zone of early gastrulae (stage 10). As gastrulation proceeds, expression expands to include the lateral and ventral marginal zones, excluding the few rows of cells above the blastopore lip. Expression moves dorsally with gastrulation cell movements, and by the end of gastrulation expression is seen in dorsal mesoderm and posterior but not anterior neural ectoderm. Expression becomes down-regulated in mesoderm but remains strong in posterior ectoderm through the neurula stages. During tailbud stages, expressed in the pronephric duct, tailbud, tailtip and forming somites. In the most posterior regions, expressed in notochord and in the floorplate of the neural tube with weak expression in the roofplate. At stage 30, expressed in a complex pattern in the head including strong expression in the lens and otic vesicle.

The protein localises to the cell membrane. In terms of biological role, acts in a planar cell polarity (PCP) complex; polarization along the apical/basal axis of epithelial cells. Regulates the polarized assembly of fibronectrin on the surface of the mesoderm during gastrulation. Essential for gastrulation cell movements, cooperating with dvl2/dsh to activate jnk. Acts together with tes to control axial elongation. This Xenopus laevis (African clawed frog) protein is Prickle-like protein 1-B (prickle1-b).